The sequence spans 520 residues: Laccase-2 (520 aa).

Residues 1–19 (MRFSNAFVLVAACISSVLA) form the signal peptide. Plastocyanin-like domains lie at 21–145 (TKTF…FVVY), 157–305 (VDDE…LTLA), and 375–488 (TVPV…FAEA). Residues H82 and H84 each contribute to the Cu cation site. 2 cysteine pairs are disulfide-bonded: C103/C509 and C135/C229. N108 carries an N-linked (GlcNAc...) asparagine glycan. 2 residues coordinate Cu cation: H127 and H129. N241 and N299 each carry an N-linked (GlcNAc...) asparagine glycan. Residues H417, H420, H422, H470, C471, H472, and H476 each coordinate Cu cation. N492 is a glycosylation site (N-linked (GlcNAc...) asparagine).

It belongs to the multicopper oxidase family. Requires Cu cation as cofactor.

Its subcellular location is the secreted. The catalysed reaction is 4 hydroquinone + O2 = 4 benzosemiquinone + 2 H2O. In terms of biological role, lignin degradation and detoxification of lignin-derived products. This is Laccase-2 (lcc2) from Agaricus bisporus (White button mushroom).